The chain runs to 179 residues: Large ribosomal subunit protein uL5 (179 aa).

It belongs to the universal ribosomal protein uL5 family. In terms of assembly, part of the 50S ribosomal subunit; part of the 5S rRNA/L5/L18/L25 subcomplex. Contacts the 5S rRNA and the P site tRNA. Forms a bridge to the 30S subunit in the 70S ribosome.

Functionally, this is one of the proteins that bind and probably mediate the attachment of the 5S RNA into the large ribosomal subunit, where it forms part of the central protuberance. In the 70S ribosome it contacts protein S13 of the 30S subunit (bridge B1b), connecting the 2 subunits; this bridge is implicated in subunit movement. Contacts the P site tRNA; the 5S rRNA and some of its associated proteins might help stabilize positioning of ribosome-bound tRNAs. In Syntrophus aciditrophicus (strain SB), this protein is Large ribosomal subunit protein uL5.